The chain runs to 365 residues: Cobalt-precorrin-5B C(1)-methyltransferase (365 aa).

Belongs to the CbiD family.

The catalysed reaction is Co-precorrin-5B + S-adenosyl-L-methionine = Co-precorrin-6A + S-adenosyl-L-homocysteine. It functions in the pathway cofactor biosynthesis; adenosylcobalamin biosynthesis; cob(II)yrinate a,c-diamide from sirohydrochlorin (anaerobic route): step 6/10. Its function is as follows. Catalyzes the methylation of C-1 in cobalt-precorrin-5B to form cobalt-precorrin-6A. This Methanococcus maripaludis (strain DSM 14266 / JCM 13030 / NBRC 101832 / S2 / LL) protein is Cobalt-precorrin-5B C(1)-methyltransferase.